A 273-amino-acid chain; its full sequence is Tryptase (273 aa).

The first 18 residues, 1 to 18 (MLKLLLLTLPLLSSLVHA), serve as a signal peptide directing secretion. The propeptide at 19-28 (APSLAMPREG) is activation peptide. The region spanning 29-270 (IVGGQEASGN…YLDWIYRYVP (242 aa)) is the Peptidase S1 domain. An N-linked (GlcNAc...) asparagine glycan is attached at Asn-49. Cys-57 and Cys-73 are joined by a disulfide. Active-site charge relay system residues include His-72 and Asp-119. 3 disulfide bridges follow: Cys-153–Cys-228, Cys-186–Cys-209, and Cys-218–Cys-246. The active-site Charge relay system is the Ser-222.

Belongs to the peptidase S1 family. Tryptase subfamily. In terms of assembly, homotetramer. Post-translationally, glycosylated. In terms of tissue distribution, mast cells.

It localises to the secreted. It carries out the reaction Preferential cleavage: Arg-|-Xaa, Lys-|-Xaa, but with more restricted specificity than trypsin.. In terms of biological role, tryptase is the major neutral protease present in mast cells and is secreted upon the coupled activation-degranulation response of this cell type. May play a role in innate immunity. In Rattus norvegicus (Rat), this protein is Tryptase (Tpsab1).